The chain runs to 117 residues: Large ribosomal subunit protein bL19 (117 aa).

This sequence belongs to the bacterial ribosomal protein bL19 family.

Functionally, this protein is located at the 30S-50S ribosomal subunit interface and may play a role in the structure and function of the aminoacyl-tRNA binding site. In Photorhabdus laumondii subsp. laumondii (strain DSM 15139 / CIP 105565 / TT01) (Photorhabdus luminescens subsp. laumondii), this protein is Large ribosomal subunit protein bL19.